The sequence spans 394 residues: Zinc finger and SCAN domain-containing protein 9 (394 aa).

Residue lysine 26 forms a Glycyl lysine isopeptide (Lys-Gly) (interchain with G-Cter in SUMO2) linkage. One can recognise an SCAN box domain in the interval 52-134 (RRHFRQLCYQ…ILLEDLEREL (83 aa)). Residues lysine 215 and lysine 238 each participate in a glycyl lysine isopeptide (Lys-Gly) (interchain with G-Cter in SUMO2) cross-link. 5 consecutive C2H2-type zinc fingers follow at residues 254–276 (HKCDECGKSFTQSSGLIRHQRIH), 282–304 (YECNECGKAFSRSSGLFNHRGIH), 310–332 (YHCKECGKVFSQSAGLIQHQRIH), 338–360 (YQCSQCSKSYSRRSFLIEHQRSH), and 366–388 (HQCIECGKSFNRHCNLIRHQKIH).

It belongs to the krueppel C2H2-type zinc-finger protein family.

The protein resides in the nucleus. May be involved in transcriptional regulation. The protein is Zinc finger and SCAN domain-containing protein 9 (ZSCAN9) of Homo sapiens (Human).